The primary structure comprises 856 residues: Dynamin-1 (856 aa).

The 267-residue stretch at 28-294 (DLDLPQIAVV…LTNHIRDTLP (267 aa)) folds into the Dynamin-type G domain. Positions 38–45 (GGQSAGKS) are G1 motif. 7 residues coordinate GDP: serine 41, glycine 43, lysine 44, serine 45, serine 46, arginine 59, and glycine 60. The segment at 64–66 (VTR) is G2 motif. Residue tyrosine 80 is modified to Phosphotyrosine. Tyrosine 125 is modified (3'-nitrotyrosine; alternate). At tyrosine 125 the chain carries Phosphotyrosine; alternate. Residues 136–139 (DLPG) form a G3 motif region. Residues 205 to 208 (TKLD) are G4 motif. Residues lysine 206, aspartate 208, aspartate 211, asparagine 236, arginine 237, and glutamine 239 each contribute to the GDP site. The interval 235–238 (VNRS) is G5 motif. Serine 306 and serine 347 each carry phosphoserine. Tyrosine 354 carries the phosphotyrosine modification. Phosphoserine is present on serine 512. A PH domain is found at 519–625 (LVIRKGWLTI…WKASFLRAGV (107 aa)). The GED domain maps to 659-750 (VETIRNLVDS…IIGDINTTTV (92 aa)). Residues 750–856 (VSTPMPPPVD…PIGSGKSIPS (107 aa)) form a disordered region. Over residues 763 to 781 (LQVQSVPTGRRSPTSSPTP) the composition is skewed to polar residues. Phosphoserine occurs at positions 774 and 778. An Omega-N-methylarginine modification is found at arginine 796. At serine 822 the chain carries Phosphoserine. Over residues 825 to 844 (PFGPPPQVPSRPNRAPPGVP) the composition is skewed to pro residues.

Belongs to the TRAFAC class dynamin-like GTPase superfamily. Dynamin/Fzo/YdjA family. Homodimer; homodimerization is mediated by the dynamin-type G domain which promotes assembly-stimulated GTPase activity. Homo-tetramer formed from two dimers in the absence of lipid. Oligomerizes into a helical polymer that self-assembles around the vesicle membrane, when associated to the menbrane through lipid binding. Interacts (via C-terminal proline-rich domain (PRD)) with SNX9 (via SH3 domain); this interaction allows regulation of DNM1 self-assembly during late stages of endocytic vesicle formation and supports DNM1's early functions in accelerating clathrin-coated pits (CCPs) maturation in non neuronals cell. Interacts (via C-terminal proline-rich domain (PRD)) with MYO1E (via SH3 domain); this interaction regulates receptor-mediated endocytosis. Interacts with SNX33 (via SH3 domain); this interaction decreases DNM1-dependent endocytosis. Interacts with DIAPH1. Interacts with GRB2 (via SH3 domain); this interaction mediates disassembly of DNM1 polymers, therefore modulates self-assembly. Forms a complex with BIN1 (via SH3 domain) and SH3GL2 (via SH3 domain). Forms a complex with SH3GL2 (via SH3 domain) and AMPH (via SH3 domain). Forms a complex with SH3GL2 (via SH3 domain) and SYNJ1. Interacts with AMPH. Interacts (via C-terminal proline-rich domain (PRD)) with SYT1; this interaction facilitates vesicle fission during clathrin-mediated endocytosis (CME). Interacts (via C-terminal proline-rich domain (PRD)) with PLCG1 (via SH3 domain); this interaction stimulates the release of GDP from DNM1 and enhances DNM1-dependent endocytosis. Interacts with SNPH; this interaction inhibits the binding of DNM1 to AMPH and DNM1-receptor-mediated endocytosis. Interacts with CAV1. Interacts with SH3GLB1 (via SH3 domain). Interacts with PACSIN1 (via SH3 domain), PACSIN2 (via SH3 domain) and PACSIN3 (via SH3 domain). Interacts with UNC119; this interaction decreases DNM1's GTPase activity and affects DNM1's interaction with AMPH. Interacts with AMPH. Interacts (GTP-bound form) with DNAJC6; this interaction allows clathrin-coated vesicle (CCV) formation at the plasma membrane. In terms of processing, phosphorylation at Ser-774 by GSK3B/GSK3-beta leads to inactivation of receptor-mediated endocytosis in non-neuronal cells. Dephosphorylation at Ser-774, through the EGFR downstream signaling, leads to activation and regulates early stages of clathrin-mediated endocytosis (CME).

The protein localises to the cell membrane. Its subcellular location is the membrane. It is found in the clathrin-coated pit. It localises to the cytoplasmic vesicle. The protein resides in the presynapse. The protein localises to the secretory vesicle. Its subcellular location is the chromaffin granule. It catalyses the reaction GTP + H2O = GDP + phosphate + H(+). Catalyzes the hydrolysis of GTP and utilizes this energy to mediate vesicle scission and participates in many forms of endocytosis, such as clathrin-mediated endocytosis or synaptic vesicle endocytosis as well as rapid endocytosis (RE). Associates to the membrane, through lipid binding, and self-assembles into rings and stacks of interconnected rings through oligomerization to form a helical polymer around the vesicle membrane leading to constriction of invaginated coated pits around their necks. Self-assembly of the helical polymer induces membrane tubules narrowing until the polymer reaches a length sufficient to trigger GTP hydrolysis. Depending on the curvature imposed on the tubules, membrane detachment from the helical polymer upon GTP hydrolysis can cause spontaneous hemifission followed by complete fission. May play a role in regulating early stages of clathrin-mediated endocytosis in non-neuronal cells through its activation by dephosphorylation via the signaling downstream of EGFR. Controls vesicle size at a step before fission, during formation of membrane pits, at hippocampal synapses. Controls plastic adaptation of the synaptic vesicle recycling machinery to high levels of activity. Mediates rapid endocytosis (RE), a Ca(2+)-dependent and clathrin- and K(+)-independent process in chromaffin cells. Microtubule-associated force-producing protein involved in producing microtubule bundles and able to bind and hydrolyze GTP. Through its interaction with DNAJC6, acts during the early steps of clathrin-coated vesicle (CCV) formation. This is Dynamin-1 from Bos taurus (Bovine).